The chain runs to 380 residues: Pregnancy-associated glycoprotein 6 (380 aa).

The signal sequence occupies residues 1–15; sequence MKWLVLLGLVSISEC. Positions 16-53 are cleaved as a propeptide — activation peptide; that stretch reads IVKIPLRRVKTMRKTLSEKNMLNNFLKEHAYRLSQISF. N-linked (GlcNAc...) asparagine glycans are attached at residues Asn-57 and Asn-74. The 307-residue stretch at 71 to 377 folds into the Peptidase A1 domain; it reads YLGNITIGTP…DRGHDRIGLA (307 aa). Asp-89 is an active-site residue. A disulfide bridge links Cys-102 with Cys-107. N-linked (GlcNAc...) asparagine glycosylation occurs at Asn-125. A disulfide bridge links Cys-261 with Cys-265. Asp-270 is an active-site residue. Cys-303 and Cys-337 are disulfide-bonded.

The protein belongs to the peptidase A1 family. In terms of tissue distribution, trophoblast and placental tissue. Produced specifically in the invasive binucleate cells of the placenta.

The protein resides in the secreted. It is found in the extracellular space. The polypeptide is Pregnancy-associated glycoprotein 6 (Ovis aries (Sheep)).